Consider the following 98-residue polypeptide: Integration host factor subunit alpha (98 aa).

Positions 52–73 are disordered; the sequence is FDLREKNQRPGRNPKTGEDIPI.

The protein belongs to the bacterial histone-like protein family. Heterodimer of an alpha and a beta chain.

This protein is one of the two subunits of integration host factor, a specific DNA-binding protein that functions in genetic recombination as well as in transcriptional and translational control. The protein is Integration host factor subunit alpha of Aeromonas hydrophila subsp. hydrophila (strain ATCC 7966 / DSM 30187 / BCRC 13018 / CCUG 14551 / JCM 1027 / KCTC 2358 / NCIMB 9240 / NCTC 8049).